The primary structure comprises 322 residues: Sideroflexin-2 (322 aa).

Methionine 1 carries the post-translational modification N-acetylmethionine. Helical transmembrane passes span 100–122 (MIITGFMLQFYRTMPAVIFWQWV), 142–164 (SVRQMALSYFTATTTAVATAVGM), 174–192 (LVGRWVPFAAVAAANCVNI), 228–250 (VVISRITMSAPGMILLPVIMERL), and 265–287 (PLQVMLSGCFLIFMVPVACGLFP).

Belongs to the sideroflexin family. Widely expressed, highest levels in kidney, liver, and pancreas.

Its subcellular location is the mitochondrion inner membrane. The protein resides in the mitochondrion outer membrane. The enzyme catalyses L-serine(in) = L-serine(out). Mitochondrial amino-acid transporter that mediates transport of serine into mitochondria. Involved in mitochondrial iron homeostasis by regulating heme biosynthesis. The protein is Sideroflexin-2 of Homo sapiens (Human).